Consider the following 570-residue polypeptide: MTKARDQTHQEGCCGSLANYLTSAKFLLYLGHSLSTWGDRMWHFAVSVFLVELYGNSLLLTAVYGLVVAGSVLVLGAIIGDWVDKNARLKVAQTSLVVQNVSVILCGIILMMVFLHKNELLTMYHGWVLTVCYILIITIANIANLASTATAITIQRDWIVVVAGENRSRLADMNATIRRIDQLTNILAPMAVGQIMTFGSPVIGCGFISGWNLVSMCVEYFLLWKVYQKTPALAVKAALKVEESELKQLTSPKDTEPKPLEGTHLMGEKDSNIRELECEQEPTCASQMAEPFRTFRDGWVSYYNQPVFLAGMGLAFLYMTVLGFDCITTGYAYTQGLSGSILSILMGASAITGIMGTVAFTWLRRKCGLVRTGLFSGLAQLSCLILCVISVFMPGSPLDLSVSPFEDIRSRFVNVEPVSPTTKIPETVFTTEMHMSNMSNVHEMSTKPIPIVSVSLLFAGVIAARIGLWSFDLTVTQLLQENVIESERGIINGVQNSMNYLLDLLHFIMVILAPNPEAFGLLVLISVSFVAMGHLMYFRFAQKTLGNQIFVCGPDEKEVTDENQPNTSVV.

At 1–23 (MTKARDQTHQEGCCGSLANYLTS) the chain is on the cytoplasmic side. A helical transmembrane segment spans residues 24 to 53 (AKFLLYLGHSLSTWGDRMWHFAVSVFLVEL). Fe cation is bound by residues aspartate 39 and histidine 43. Residues 54–57 (YGNS) are Extracellular-facing. Residues 58-84 (LLLTAVYGLVVAGSVLVLGAIIGDWVD) form a helical membrane-spanning segment. Residues 85-87 (KNA) lie on the Cytoplasmic side of the membrane. The chain crosses the membrane as a helical span at residues 88–118 (RLKVAQTSLVVQNVSVILCGIILMMVFLHKN). Residues 119–126 (ELLTMYHG) lie on the Extracellular side of the membrane. A helical transmembrane segment spans residues 127–162 (WVLTVCYILIITIANIANLASTATAITIQRDWIVVV). Residues 163-164 (AG) are Cytoplasmic-facing. Residues 165 to 195 (ENRSRLADMNATIRRIDQLTNILAPMAVGQI) traverse the membrane as a helical segment. Over 196–202 (MTFGSPV) the chain is Extracellular. A helical membrane pass occupies residues 203 to 229 (IGCGFISGWNLVSMCVEYFLLWKVYQK). Topologically, residues 230–306 (TPALAVKAAL…DGWVSYYNQP (77 aa)) are cytoplasmic. Residues 307–333 (VFLAGMGLAFLYMTVLGFDCITTGYAY) traverse the membrane as a helical segment. Residue cysteine 326 coordinates Fe cation. The Extracellular segment spans residues 334 to 338 (TQGLS). Residues 339 to 366 (GSILSILMGASAITGIMGTVAFTWLRRK) traverse the membrane as a helical segment. Topologically, residues 367-368 (CG) are cytoplasmic. The chain crosses the membrane as a helical span at residues 369–391 (LVRTGLFSGLAQLSCLILCVISV). The Extracellular portion of the chain corresponds to 392–452 (FMPGSPLDLS…EMSTKPIPIV (61 aa)). Asparagine 437 is a glycosylation site (N-linked (GlcNAc...) asparagine). The chain crosses the membrane as a helical span at residues 453–482 (SVSLLFAGVIAARIGLWSFDLTVTQLLQEN). The Cytoplasmic portion of the chain corresponds to 483–487 (VIESE). A helical transmembrane segment spans residues 488–512 (RGIINGVQNSMNYLLDLLHFIMVIL). Position 506 (histidine 506) interacts with Fe cation. Topologically, residues 513 to 515 (APN) are extracellular. A helical membrane pass occupies residues 516–541 (PEAFGLLVLISVSFVAMGHLMYFRFA). Topologically, residues 542–570 (QKTLGNQIFVCGPDEKEVTDENQPNTSVV) are cytoplasmic.

It belongs to the ferroportin (FP) (TC 2.A.100) family. SLC40A subfamily. As to quaternary structure, identified in a complex with STOM. Interacts with HAMP; affinity of the peptide hormone HAMP for SLC40A1 increases by 80-fold in the presence of iron and the interaction promotes SLC40A1 ubiquitination and degradation. Part of a complex composed of SLC40A1/ferroportin, TF/transferrin and HEPH/hephaestin that transfers iron from cells to transferrin. Post-translationally, polyubiquitinated by RNF217; leading to proteasomal degradation. Under conditions of high systemic iron levels, both the hormone peptide hepcidin/HAMP and holo(iron bound)-transferrin/TF induce the ubiquitination, internalization and proteasomal degradation of SLC40A1 to control iron release from cells. In terms of tissue distribution, high expression in spleen, liver, kidney, heart and duodenum.

It localises to the cell membrane. It is found in the basolateral cell membrane. It catalyses the reaction Fe(2+)(in) = Fe(2+)(out). Transports Fe(2+) from the inside of a cell to the outside of the cell, playing a key role for maintaining systemic iron homeostasis. Transports iron from intestinal, splenic, hepatic cells, macrophages and erythrocytes into the blood to provide iron to other tissues. Controls therefore dietary iron uptake, iron recycling by macrophages and erythrocytes, and release of iron stores in hepatocytes. When iron is in excess in serum, circulating HAMP/hepcidin levels increase resulting in a degradation of SLC40A1, thus limiting the iron efflux to plasma. This Mus musculus (Mouse) protein is Ferroportin.